The following is a 1099-amino-acid chain: Carbamoyl phosphate synthase large chain (1099 aa).

Residues 1-402 (MPKREDIKRI…ALGKALRSLE (402 aa)) are carboxyphosphate synthetic domain. Residues arginine 129, arginine 169, glycine 175, glycine 176, glutamate 208, valine 210, glutamate 215, glycine 241, isoleucine 242, histidine 243, glutamine 285, and glutamate 299 each coordinate ATP. The ATP-grasp 1 domain maps to 133–328 (KETMEKAGLE…IAKVAALLAV (196 aa)). Residues glutamine 285, glutamate 299, and asparagine 301 each contribute to the Mg(2+) site. Residues glutamine 285, glutamate 299, and asparagine 301 each coordinate Mn(2+). The interval 403–541 (LDAAPKLDLE…STYNGVENEA (139 aa)) is oligomerization domain. The segment at 542-944 (VPSDREKIMI…AFAKAQIAAG (403 aa)) is carbamoyl phosphate synthetic domain. Residues 666–857 (AKLLKQIGLK…VARIAAKIMV (192 aa)) enclose the ATP-grasp 2 domain. 10 residues coordinate ATP: arginine 702, lysine 741, leucine 743, glutamate 748, glycine 773, valine 774, histidine 775, serine 776, glutamine 816, and glutamate 828. Positions 816, 828, and 830 each coordinate Mg(2+). 3 residues coordinate Mn(2+): glutamine 816, glutamate 828, and asparagine 830. Residues 945–1099 (NPLPTTGAIL…VRRLTDTWKM (155 aa)) form the MGS-like domain. Residues 945 to 1099 (NPLPTTGAIL…VRRLTDTWKM (155 aa)) form an allosteric domain region.

It belongs to the CarB family. As to quaternary structure, composed of two chains; the small (or glutamine) chain promotes the hydrolysis of glutamine to ammonia, which is used by the large (or ammonia) chain to synthesize carbamoyl phosphate. Tetramer of heterodimers (alpha,beta)4. It depends on Mg(2+) as a cofactor. Requires Mn(2+) as cofactor.

It catalyses the reaction hydrogencarbonate + L-glutamine + 2 ATP + H2O = carbamoyl phosphate + L-glutamate + 2 ADP + phosphate + 2 H(+). The enzyme catalyses hydrogencarbonate + NH4(+) + 2 ATP = carbamoyl phosphate + 2 ADP + phosphate + 2 H(+). The protein operates within amino-acid biosynthesis; L-arginine biosynthesis; carbamoyl phosphate from bicarbonate: step 1/1. Its pathway is pyrimidine metabolism; UMP biosynthesis via de novo pathway; (S)-dihydroorotate from bicarbonate: step 1/3. Its function is as follows. Large subunit of the glutamine-dependent carbamoyl phosphate synthetase (CPSase). CPSase catalyzes the formation of carbamoyl phosphate from the ammonia moiety of glutamine, carbonate, and phosphate donated by ATP, constituting the first step of 2 biosynthetic pathways, one leading to arginine and/or urea and the other to pyrimidine nucleotides. The large subunit (synthetase) binds the substrates ammonia (free or transferred from glutamine from the small subunit), hydrogencarbonate and ATP and carries out an ATP-coupled ligase reaction, activating hydrogencarbonate by forming carboxy phosphate which reacts with ammonia to form carbamoyl phosphate. In Thermotoga petrophila (strain ATCC BAA-488 / DSM 13995 / JCM 10881 / RKU-1), this protein is Carbamoyl phosphate synthase large chain.